Consider the following 46-residue polypeptide: Large ribosomal subunit protein bL36 (46 aa).

It belongs to the bacterial ribosomal protein bL36 family.

In Serratia proteamaculans (strain 568), this protein is Large ribosomal subunit protein bL36.